A 332-amino-acid chain; its full sequence is Eukaryotic translation initiation factor 3 subunit I (332 aa).

WD repeat units lie at residues 8 to 47 (GHER…GTYH), 48 to 87 (GHQG…LLHT), 144 to 182 (DESK…LLSS), and 279 to 318 (GHFG…FDFM).

It belongs to the eIF-3 subunit I family. In terms of assembly, component of the eukaryotic translation initiation factor 3 (eIF-3) complex.

It is found in the cytoplasm. Functionally, component of the eukaryotic translation initiation factor 3 (eIF-3) complex, which is involved in protein synthesis of a specialized repertoire of mRNAs and, together with other initiation factors, stimulates binding of mRNA and methionyl-tRNAi to the 40S ribosome. The eIF-3 complex specifically targets and initiates translation of a subset of mRNAs involved in cell proliferation. The protein is Eukaryotic translation initiation factor 3 subunit I of Phaeosphaeria nodorum (strain SN15 / ATCC MYA-4574 / FGSC 10173) (Glume blotch fungus).